Reading from the N-terminus, the 275-residue chain is 2,3,4,5-tetrahydropyridine-2,6-dicarboxylate N-succinyltransferase (275 aa).

The substrate site is built by Arg-107 and Asp-144.

The protein belongs to the transferase hexapeptide repeat family. Homotrimer.

The protein resides in the cytoplasm. It catalyses the reaction (S)-2,3,4,5-tetrahydrodipicolinate + succinyl-CoA + H2O = (S)-2-succinylamino-6-oxoheptanedioate + CoA. Its pathway is amino-acid biosynthesis; L-lysine biosynthesis via DAP pathway; LL-2,6-diaminopimelate from (S)-tetrahydrodipicolinate (succinylase route): step 1/3. The chain is 2,3,4,5-tetrahydropyridine-2,6-dicarboxylate N-succinyltransferase from Polynucleobacter asymbioticus (strain DSM 18221 / CIP 109841 / QLW-P1DMWA-1) (Polynucleobacter necessarius subsp. asymbioticus).